The sequence spans 131 residues: Small ribosomal subunit protein uS8 (131 aa).

The protein belongs to the universal ribosomal protein uS8 family. As to quaternary structure, part of the 30S ribosomal subunit. Contacts proteins S5 and S12.

Functionally, one of the primary rRNA binding proteins, it binds directly to 16S rRNA central domain where it helps coordinate assembly of the platform of the 30S subunit. The chain is Small ribosomal subunit protein uS8 from Campylobacter jejuni subsp. doylei (strain ATCC BAA-1458 / RM4099 / 269.97).